Here is a 548-residue protein sequence, read N- to C-terminus: Probable malate:quinone oxidoreductase (548 aa).

Residues 521-548 (DKPQAADSTPKPQLKPQPVQKEVADIAL) are disordered. Residues 530–541 (PKPQLKPQPVQK) show a composition bias toward low complexity.

Belongs to the MQO family. Requires FAD as cofactor.

The catalysed reaction is (S)-malate + a quinone = a quinol + oxaloacetate. Its pathway is carbohydrate metabolism; tricarboxylic acid cycle; oxaloacetate from (S)-malate (quinone route): step 1/1. This is Probable malate:quinone oxidoreductase from Escherichia coli (strain UTI89 / UPEC).